A 277-amino-acid chain; its full sequence is Caspase-3 (277 aa).

Met1 carries the post-translational modification N-acetylmethionine. 2 consecutive propeptides follow at residues 1 to 9 and 10 to 28; these read MENTENSVD and AKSF…KSMD. Position 11 is an N6-acetyllysine (Lys11). Phosphoserine is present on Ser26. Catalysis depends on residues His121 and Cys163. Cys163 carries the post-translational modification S-nitrosocysteine; in inhibited form.

The protein belongs to the peptidase C14A family. As to quaternary structure, heterotetramer that consists of two anti-parallel arranged heterodimers, each one formed by a 17 kDa (p17) and a 12 kDa (p12) subunit. Interacts with BIRC6/bruce. In terms of processing, cleavage by granzyme B, caspase-6, caspase-8 and caspase-10 generates the two active subunits. Additional processing of the propeptides is likely due to the autocatalytic activity of the activated protease. Active heterodimers between the small subunit of caspase-7 protease and the large subunit of caspase-3 also occur and vice versa. S-nitrosylated on its catalytic site cysteine in unstimulated cell lines and denitrosylated upon activation of the Fas apoptotic pathway, associated with an increase in intracellular caspase activity. Fas therefore activates caspase-3 not only by inducing the cleavage of the caspase zymogen to its active subunits, but also by stimulating the denitrosylation of its active site thiol. Post-translationally, ubiquitinated by BIRC6; this activity is inhibited by DIABLO/SMAC.

The protein resides in the cytoplasm. It carries out the reaction Strict requirement for an Asp residue at positions P1 and P4. It has a preferred cleavage sequence of Asp-Xaa-Xaa-Asp-|- with a hydrophobic amino-acid residue at P2 and a hydrophilic amino-acid residue at P3, although Val or Ala are also accepted at this position.. Its activity is regulated as follows. Inhibited by BIRC6; following inhibition of BIRC6-caspase binding by DIABLO/SMAC, BIRC6 is subjected to caspase cleavage, leading to an increase in active caspases. Functionally, involved in the activation cascade of caspases responsible for apoptosis execution. At the onset of apoptosis, it proteolytically cleaves poly(ADP-ribose) polymerase PARP1 at a '216-Asp-|-Gly-217' bond. Cleaves and activates sterol regulatory element binding proteins (SREBPs) between the basic helix-loop-helix leucine zipper domain and the membrane attachment domain. Cleaves and activates caspase-6, -7 and -9 (CASP6, CASP7 and CASP9, respectively). Cleaves and inactivates interleukin-18 (IL18). Triggers cell adhesion in sympathetic neurons through RET cleavage. Cleaves IL-1 beta between an Asp and an Ala, releasing the mature cytokine which is involved in a variety of inflammatory processes. Cleaves and inhibits serine/threonine-protein kinase AKT1 in response to oxidative stress. Acts as an inhibitor of type I interferon production during virus-induced apoptosis by mediating cleavage of antiviral proteins CGAS, IRF3 and MAVS, thereby preventing cytokine overproduction. Also involved in pyroptosis by mediating cleavage and activation of gasdermin-E (GSDME). Cleaves XRCC4 and phospholipid scramblase proteins XKR4, XKR8 and XKR9, leading to promote phosphatidylserine exposure on apoptotic cell surface. Cleaves BIRC6 following inhibition of BIRC6-caspase binding by DIABLO/SMAC. The polypeptide is Caspase-3 (CASP3) (Canis lupus familiaris (Dog)).